Here is a 351-residue protein sequence, read N- to C-terminus: Photosystem II D2 protein (351 aa).

Residues 39–59 (CSYLALGAWFTGTTFVTSWYT) traverse the membrane as a helical segment. Residue His116 coordinates chlorophyll a. A helical transmembrane segment spans residues 123 to 139 (GFCLRQFEIARLVGIRP). Pheophytin a-binding residues include Gln128 and Asn141. The helical transmembrane segment at 151–164 (VFVSVFLIYPLGQA) threads the bilayer. His196 is a binding site for chlorophyll a. Residues 206-226 (GALLCAIHGATVENTLFEDGE) form a helical membrane-spanning segment. A plastoquinone contacts are provided by His213 and Phe260. A Fe cation-binding site is contributed by His213. Position 267 (His267) interacts with Fe cation. A helical membrane pass occupies residues 277 to 293 (GLWTSSIGIIGLALNLR).

It belongs to the reaction center PufL/M/PsbA/D family. PSII is composed of 1 copy each of membrane proteins PsbA, PsbB, PsbC, PsbD, PsbE, PsbF, PsbH, PsbI, PsbJ, PsbK, PsbL, PsbM, PsbT, PsbY, PsbZ, Psb30/Ycf12, at least 3 peripheral proteins of the oxygen-evolving complex and a large number of cofactors. It forms dimeric complexes. The D1/D2 heterodimer binds P680, chlorophylls that are the primary electron donor of PSII, and subsequent electron acceptors. It shares a non-heme iron and each subunit binds pheophytin, quinone, additional chlorophylls, carotenoids and lipids. There is also a Cl(-1) ion associated with D1 and D2, which is required for oxygen evolution. The PSII complex binds additional chlorophylls, carotenoids and specific lipids. is required as a cofactor.

The protein localises to the plastid. Its subcellular location is the chloroplast thylakoid membrane. The enzyme catalyses 2 a plastoquinone + 4 hnu + 2 H2O = 2 a plastoquinol + O2. Its function is as follows. Photosystem II (PSII) is a light-driven water:plastoquinone oxidoreductase that uses light energy to abstract electrons from H(2)O, generating O(2) and a proton gradient subsequently used for ATP formation. It consists of a core antenna complex that captures photons, and an electron transfer chain that converts photonic excitation into a charge separation. The D1/D2 (PsbA/PsbD) reaction center heterodimer binds P680, the primary electron donor of PSII as well as several subsequent electron acceptors. D2 is needed for assembly of a stable PSII complex. The chain is Photosystem II D2 protein from Galdieria sulphuraria (Red alga).